Reading from the N-terminus, the 527-residue chain is ATP-dependent RNA helicase DBP3 (527 aa).

Residues 1-11 (MSKDHKDKKRK) show a composition bias toward basic residues. Residues 1–89 (MSKDHKDKKR…TGYSQSPALT (89 aa)) form a disordered region. Positions 12-24 (HSDEATEEVEKKT) are enriched in basic and acidic residues. Positions 25 to 44 (KVSKKEKKDKKEKKEKKDKK) are enriched in basic residues. A compositionally biased stretch (basic and acidic residues) spans 45–71 (EKKDKSEKKDKSEKKEKKEKKESEDVP). Positions 72 to 89 (TKSSAVVSTGYSQSPALT) are enriched in polar residues. Residues 119–145 (LGFDQIDLDSRIASVISKFPTPTPIQA) carry the Q motif motif. The 172-residue stretch at 148 to 319 (WPYLLSGKDV…STFMNSPVKV (172 aa)) folds into the Helicase ATP-binding domain. 161 to 168 (AETGSGKT) serves as a coordination point for ATP. Residues 266–269 (DEAD) carry the DEAD box motif. One can recognise a Helicase C-terminal domain in the interval 348-497 (KLLSLLRKYQ…PVPDELLKFG (150 aa)).

The protein belongs to the DEAD box helicase family. DDX5/DBP2 subfamily.

It is found in the nucleus. Its subcellular location is the nucleolus. It carries out the reaction ATP + H2O = ADP + phosphate + H(+). ATP-dependent RNA helicase required for 60S ribosomal subunit synthesis. Involved in efficient pre-rRNA processing, predominantly at site A3, which is necessary for the normal formation of 25S and 5.8S rRNAs. In Debaryomyces hansenii (strain ATCC 36239 / CBS 767 / BCRC 21394 / JCM 1990 / NBRC 0083 / IGC 2968) (Yeast), this protein is ATP-dependent RNA helicase DBP3 (DBP3).